Reading from the N-terminus, the 463-residue chain is Fumarate hydratase class II (463 aa).

Residues 97-99 (SGT), 128-131 (HPND), 138-140 (SSN), and threonine 186 contribute to the substrate site. The active-site Proton donor/acceptor is the histidine 187. Serine 317 is an active-site residue. Residues serine 318 and 323–325 (KVN) contribute to the substrate site.

This sequence belongs to the class-II fumarase/aspartase family. Fumarase subfamily. In terms of assembly, homotetramer.

The protein resides in the cytoplasm. It catalyses the reaction (S)-malate = fumarate + H2O. It participates in carbohydrate metabolism; tricarboxylic acid cycle; (S)-malate from fumarate: step 1/1. In terms of biological role, involved in the TCA cycle. Catalyzes the stereospecific interconversion of fumarate to L-malate. The sequence is that of Fumarate hydratase class II from Helicobacter pylori (strain J99 / ATCC 700824) (Campylobacter pylori J99).